The sequence spans 239 residues: dITP/XTP pyrophosphatase (239 aa).

Residue 7–12 (THNEGK) participates in substrate binding. Aspartate 74 functions as the Proton acceptor in the catalytic mechanism. Aspartate 74 contributes to the Mg(2+) binding site. Residues serine 75, 182 to 185 (FGYD), lysine 214, and 219 to 220 (HR) contribute to the substrate site.

This sequence belongs to the HAM1 NTPase family. In terms of assembly, homodimer. Mg(2+) is required as a cofactor.

The enzyme catalyses XTP + H2O = XMP + diphosphate + H(+). It carries out the reaction dITP + H2O = dIMP + diphosphate + H(+). It catalyses the reaction ITP + H2O = IMP + diphosphate + H(+). Its function is as follows. Pyrophosphatase that catalyzes the hydrolysis of nucleoside triphosphates to their monophosphate derivatives, with a high preference for the non-canonical purine nucleotides XTP (xanthosine triphosphate), dITP (deoxyinosine triphosphate) and ITP. Seems to function as a house-cleaning enzyme that removes non-canonical purine nucleotides from the nucleotide pool, thus preventing their incorporation into DNA/RNA and avoiding chromosomal lesions. This Bifidobacterium animalis subsp. lactis (strain AD011) protein is dITP/XTP pyrophosphatase.